A 158-amino-acid polypeptide reads, in one-letter code: Adenosine 5'-monophosphoramidase HNT1 (158 aa).

The 104-residue stretch at 26 to 129 (IFCKIIKSEI…IPKRDEKSGL (104 aa)) folds into the HIT domain. Residues 51–52 (DI), Asn-103, 109–111 (HQE), and 116–118 (HFH) each bind AMP. A Histidine triad motif motif is present at residues 114 to 118 (HVHFH). His-116 acts as the Tele-AMP-histidine intermediate in catalysis.

It belongs to the HINT family. In terms of assembly, homodimer. Interacts with KIN28. The cofactor is Mg(2+).

It catalyses the reaction adenosine 5'-phosphoramidate + H2O = AMP + NH4(+). Hydrolyzes adenosine 5'-monophosphoramidate substrates such as AMP-morpholidate, AMP-N-alanine methyl ester, AMP-alpha-acetyl lysine methyl ester and AMP-NH2. Plays a role in the regulation of kinase KIN28 function. Essential for growth on galactose media at elevated temperatures. The protein is Adenosine 5'-monophosphoramidase HNT1 of Saccharomyces cerevisiae (strain ATCC 204508 / S288c) (Baker's yeast).